The following is a 670-amino-acid chain: DNA ligase (670 aa).

Residues D34 to D38, S83 to L84, and E113 each bind NAD(+). Catalysis depends on K115, which acts as the N6-AMP-lysine intermediate. Positions 136, 173, 288, and 312 each coordinate NAD(+). Positions 406, 409, 424, and 430 each coordinate Zn(2+). The BRCT domain maps to P591–S670.

It belongs to the NAD-dependent DNA ligase family. LigA subfamily. The cofactor is Mg(2+). Mn(2+) is required as a cofactor.

The enzyme catalyses NAD(+) + (deoxyribonucleotide)n-3'-hydroxyl + 5'-phospho-(deoxyribonucleotide)m = (deoxyribonucleotide)n+m + AMP + beta-nicotinamide D-nucleotide.. Functionally, DNA ligase that catalyzes the formation of phosphodiester linkages between 5'-phosphoryl and 3'-hydroxyl groups in double-stranded DNA using NAD as a coenzyme and as the energy source for the reaction. It is essential for DNA replication and repair of damaged DNA. In Cytophaga hutchinsonii (strain ATCC 33406 / DSM 1761 / CIP 103989 / NBRC 15051 / NCIMB 9469 / D465), this protein is DNA ligase.